Reading from the N-terminus, the 560-residue chain is Putative transport protein VSAL_I2029 (560 aa).

A run of 5 helical transmembrane segments spans residues 14–34 (ILLLFVVLALGLFIAKVKIGS), 37–57 (LGSSIGVLITALFMGSLGYTF), 66–86 (FMLFIFCVGIEAGPNFFGIFL), 94–114 (LLVLVVLISAISLSFLTGYYF), and 161–181 (NLSVGYAFSYLIGLTSLILLA). 2 RCK C-terminal domains span residues 203 to 292 (RGIG…FRNG) and 293 to 376 (KEVF…KIGF). 5 helical membrane passes run 386–406 (LLAFCSFFILGIMFGMITMSF), 409–429 (VTFGLGNAVGLLISGITLGFL), 451–471 (GLLVFMVGIGLSAGGNIIEYF), 478–498 (VLAAALIVSVIPVILAYLVGA), and 539–559 (AGTYAIANILMTVAGTIMILL).

This sequence belongs to the AAE transporter (TC 2.A.81) family. YbjL subfamily.

The protein resides in the cell membrane. This Aliivibrio salmonicida (strain LFI1238) (Vibrio salmonicida (strain LFI1238)) protein is Putative transport protein VSAL_I2029.